Consider the following 204-residue polypeptide: Leucyl/phenylalanyl-tRNA--protein transferase (204 aa).

It belongs to the L/F-transferase family.

Its subcellular location is the cytoplasm. It carries out the reaction N-terminal L-lysyl-[protein] + L-leucyl-tRNA(Leu) = N-terminal L-leucyl-L-lysyl-[protein] + tRNA(Leu) + H(+). It catalyses the reaction N-terminal L-arginyl-[protein] + L-leucyl-tRNA(Leu) = N-terminal L-leucyl-L-arginyl-[protein] + tRNA(Leu) + H(+). The enzyme catalyses L-phenylalanyl-tRNA(Phe) + an N-terminal L-alpha-aminoacyl-[protein] = an N-terminal L-phenylalanyl-L-alpha-aminoacyl-[protein] + tRNA(Phe). Functionally, functions in the N-end rule pathway of protein degradation where it conjugates Leu, Phe and, less efficiently, Met from aminoacyl-tRNAs to the N-termini of proteins containing an N-terminal arginine or lysine. The sequence is that of Leucyl/phenylalanyl-tRNA--protein transferase from Brucella anthropi (strain ATCC 49188 / DSM 6882 / CCUG 24695 / JCM 21032 / LMG 3331 / NBRC 15819 / NCTC 12168 / Alc 37) (Ochrobactrum anthropi).